Reading from the N-terminus, the 345-residue chain is Beta-2-glycoprotein 1 (345 aa).

An N-terminal signal peptide occupies residues 1-19 (MISPVLILFSSFLCHVAIA). 4 consecutive Sushi domains span residues 21–81 (RTCP…KCTP), 82–139 (RVCP…VCAP), 140–202 (ITCP…ECRE), and 203–262 (VKCP…SCKA). Disulfide bonds link Cys-23/Cys-66, Cys-51/Cys-79, Cys-84/Cys-124, Cys-110/Cys-137, Cys-142/Cys-188, Cys-174/Cys-200, Cys-205/Cys-248, Cys-234/Cys-260, Cys-264/Cys-315, Cys-300/Cys-325, and Cys-307/Cys-345. O-linked (GalNAc...) threonine glycosylation occurs at Thr-33. Thr-149 carries an O-linked (GalNAc...) threonine glycan. N-linked (GlcNAc...) asparagine glycosylation is found at Asn-162, Asn-183, and Asn-193. An N-linked (GlcNAc...) asparagine glycan is attached at Asn-253. Positions 263–345 (SCKVPVKKAT…KTDASDVKPC (83 aa)) are sushi-like.

Expressed by the liver and secreted in plasma.

The protein localises to the secreted. Binds to various kinds of negatively charged substances such as heparin, phospholipids, and dextran sulfate. May prevent activation of the intrinsic blood coagulation cascade by binding to phospholipids on the surface of damaged cells. In Pan troglodytes (Chimpanzee), this protein is Beta-2-glycoprotein 1 (APOH).